The following is a 417-amino-acid chain: NADH-quinone oxidoreductase subunit D (417 aa).

It belongs to the complex I 49 kDa subunit family. As to quaternary structure, NDH-1 is composed of 14 different subunits. Subunits NuoB, C, D, E, F, and G constitute the peripheral sector of the complex.

The protein localises to the cell inner membrane. It catalyses the reaction a quinone + NADH + 5 H(+)(in) = a quinol + NAD(+) + 4 H(+)(out). Functionally, NDH-1 shuttles electrons from NADH, via FMN and iron-sulfur (Fe-S) centers, to quinones in the respiratory chain. The immediate electron acceptor for the enzyme in this species is believed to be ubiquinone. Couples the redox reaction to proton translocation (for every two electrons transferred, four hydrogen ions are translocated across the cytoplasmic membrane), and thus conserves the redox energy in a proton gradient. In Coxiella burnetii (strain RSA 331 / Henzerling II), this protein is NADH-quinone oxidoreductase subunit D.